A 191-amino-acid polypeptide reads, in one-letter code: Peptidyl-tRNA hydrolase (191 aa).

Y17 serves as a coordination point for tRNA. H22 functions as the Proton acceptor in the catalytic mechanism. TRNA-binding residues include Y68, N70, and N116.

It belongs to the PTH family. As to quaternary structure, monomer.

Its subcellular location is the cytoplasm. The enzyme catalyses an N-acyl-L-alpha-aminoacyl-tRNA + H2O = an N-acyl-L-amino acid + a tRNA + H(+). Functionally, hydrolyzes ribosome-free peptidyl-tRNAs (with 1 or more amino acids incorporated), which drop off the ribosome during protein synthesis, or as a result of ribosome stalling. Catalyzes the release of premature peptidyl moieties from peptidyl-tRNA molecules trapped in stalled 50S ribosomal subunits, and thus maintains levels of free tRNAs and 50S ribosomes. The protein is Peptidyl-tRNA hydrolase of Mycobacterium avium (strain 104).